The chain runs to 621 residues: Na(+)/H(+) antiporter NhaA (621 aa).

The segment at 1–430 (MPASSFGESS…LGWLIFKVAA (430 aa)) is na(+)/H(+) antiporter NhaA. 11 helical membrane passes run 27-47 (GAAVLLVIVTVVALVWANSPL), 72-92 (LHHWVNDGLMVVFFFLIGLEV), 109-129 (LALIAGVTGVVLPALVYVLIV), 139-159 (GWGAVVGTDTAFMLGTLAIVG), 168-188 (VFLLTLTVVDDFLAVSIIGIV), 192-212 (EIRIVPLLIALASLVGLWLLG), 223-243 (VLIVIVLWFATVYSGIHASLA), 300-320 (FLRLPTALLIVPIFALANAGV), 339-359 (VIAGLVLGKLLGIGLTTLVAV), 375-395 (VFGGAALSGIGFTVSLLIIGL), and 409-429 (VGVLVSMVFATLLGWLIFKVA). Residues 431-578 (QRWGEKTADL…VERDLASAVA (148 aa)) form the Thioredoxin domain.

This sequence in the N-terminal section; belongs to the NhaA Na(+)/H(+) (TC 2.A.33) antiporter family.

Its subcellular location is the cell inner membrane. The catalysed reaction is Na(+)(in) + 2 H(+)(out) = Na(+)(out) + 2 H(+)(in). Functionally, na(+)/H(+) antiporter that extrudes sodium in exchange for external protons. The polypeptide is Na(+)/H(+) antiporter NhaA (Herminiimonas arsenicoxydans).